The sequence spans 245 residues: RNA polymerase sigma factor SigI5 (245 aa).

The Polymerase core binding motif lies at 60–73 (DEYSIGLMAFNEAI). The segment at residues 202–221 (MKELSKIIDVHPKTVERNRA) is a DNA-binding region (H-T-H motif).

Belongs to the sigma-70 factor family. SigI subfamily. In terms of assembly, interacts with RsgI5.

The protein resides in the cytoplasm. With respect to regulation, negatively regulated by the anti-sigma-I factor RsgI5. Binding of the polysaccharide substrate to RsgI5 may lead to the release and activation of SigI5. Sigma factors are initiation factors that promote the attachment of RNA polymerase to specific initiation sites and are then released. This sigma factor is involved in regulation of cellulosomal genes via an external polysaccharide-sensing mechanism. This Acetivibrio thermocellus (strain ATCC 27405 / DSM 1237 / JCM 9322 / NBRC 103400 / NCIMB 10682 / NRRL B-4536 / VPI 7372) (Clostridium thermocellum) protein is RNA polymerase sigma factor SigI5.